The chain runs to 344 residues: MKVIKTAPLIPSEIKVLEKEGNRIKISLAPFEFGYAVTLAHPIRRLLLLSSVGYAPVGLKIEGVHHEFDSLRGVTEDVSLFIMNLKNIRFIAKALVGQDSPLENQSVVVDYSFKGPMELRARDLNSEHIEIINPEMLLATINEDAQLNFSLIIYKGMGYVPSEITRELMPEGYMPLDGSFTPIKNVVYEIENVLVEGDPNYEKIIFDIETDGQIDPYKAFLSAVKVMSKQLGVFGEKPIANTEYSGDYAQRDDAKDLSAKIESMNLSARCFNCLDKIGIKYVGELVLMSEEELKGVKNMGKKSYDEIAEKLNDLGYPVGTELSLEQRESLKKRLEKLEDKGGND.

The alpha N-terminal domain (alpha-NTD) stretch occupies residues 1 to 238; sequence MKVIKTAPLI…KQLGVFGEKP (238 aa). The interval 253 to 344 is alpha C-terminal domain (alpha-CTD); it reads DAKDLSAKIE…EKLEDKGGND (92 aa).

This sequence belongs to the RNA polymerase alpha chain family. Homodimer. The RNAP catalytic core consists of 2 alpha, 1 beta, 1 beta' and 1 omega subunit. When a sigma factor is associated with the core the holoenzyme is formed, which can initiate transcription.

It catalyses the reaction RNA(n) + a ribonucleoside 5'-triphosphate = RNA(n+1) + diphosphate. Its function is as follows. DNA-dependent RNA polymerase catalyzes the transcription of DNA into RNA using the four ribonucleoside triphosphates as substrates. The polypeptide is DNA-directed RNA polymerase subunit alpha (Helicobacter acinonychis (strain Sheeba)).